We begin with the raw amino-acid sequence, 336 residues long: HTH-type transcriptional repressor PurR (336 aa).

The 55-residue stretch at 2 to 56 (ATIKDVAKLAGVSTTTVSHVINKTRFVAEDTSKAVWDAIQQLNYSPSAVARSLKV) folds into the HTH lacI-type domain. A DNA-binding region (H-T-H motif) is located at residues 4 to 23 (IKDVAKLAGVSTTTVSHVIN). The DNA-binding element occupies 48–56 (SAVARSLKV). The hypoxanthine site is built by Tyr-73, Lys-188, Phe-219, and Asp-273.

As to quaternary structure, homodimer.

It participates in purine metabolism; purine nucleotide biosynthesis [regulation]. Is the main repressor of the genes involved in the de novo synthesis of purine nucleotides, regulating purB, purC, purEK, purF, purHD, purL, purMN and guaBA expression. PurR is allosterically activated to bind its cognate DNA by binding the purine corepressors, hypoxanthine or guanine, thereby effecting transcription repression. In Actinobacillus pleuropneumoniae serotype 3 (strain JL03), this protein is HTH-type transcriptional repressor PurR.